A 202-amino-acid chain; its full sequence is uncharacterized protein (202 aa).

The next 3 membrane-spanning stretches (helical) occupy residues 34-54 (AAYV…QARI), 102-122 (MGVA…PLVI), and 125-145 (ILPL…FNKA). Positions 165-202 (NKPAAAVTGTSSNSNNASAKSDGPTITELNENETEKSS) are disordered. The span at 168-185 (AAAVTGTSSNSNNASAKS) shows a compositional bias: low complexity. Phosphoserine occurs at positions 185 and 201.

The protein belongs to the PHO88 family.

It localises to the endoplasmic reticulum membrane. This is an uncharacterized protein from Schizosaccharomyces pombe (strain 972 / ATCC 24843) (Fission yeast).